We begin with the raw amino-acid sequence, 443 residues long: Immediate-early protein ICP-46 homolog (443 aa).

A coiled-coil region spans residues 82 to 110; the sequence is EFSEHEQEELKEKMAQLNHCLEDCELDYS.

The protein belongs to the IIV-6 393L family.

The sequence is that of Immediate-early protein ICP-46 homolog from Aedes vexans (Inland floodwater mosquito).